The following is a 140-amino-acid chain: Nucleoside diphosphate kinase (140 aa).

Positions 11, 59, 87, 93, 104, and 114 each coordinate ATP. The active-site Pros-phosphohistidine intermediate is His-117.

The protein belongs to the NDK family. As to quaternary structure, homotetramer. Requires Mg(2+) as cofactor.

Its subcellular location is the cytoplasm. The catalysed reaction is a 2'-deoxyribonucleoside 5'-diphosphate + ATP = a 2'-deoxyribonucleoside 5'-triphosphate + ADP. It catalyses the reaction a ribonucleoside 5'-diphosphate + ATP = a ribonucleoside 5'-triphosphate + ADP. Functionally, major role in the synthesis of nucleoside triphosphates other than ATP. The ATP gamma phosphate is transferred to the NDP beta phosphate via a ping-pong mechanism, using a phosphorylated active-site intermediate. This chain is Nucleoside diphosphate kinase, found in Mesorhizobium japonicum (strain LMG 29417 / CECT 9101 / MAFF 303099) (Mesorhizobium loti (strain MAFF 303099)).